A 105-amino-acid chain; its full sequence is Large ribosomal subunit protein uL24 (105 aa).

Belongs to the universal ribosomal protein uL24 family. In terms of assembly, part of the 50S ribosomal subunit.

In terms of biological role, one of two assembly initiator proteins, it binds directly to the 5'-end of the 23S rRNA, where it nucleates assembly of the 50S subunit. Functionally, one of the proteins that surrounds the polypeptide exit tunnel on the outside of the subunit. The protein is Large ribosomal subunit protein uL24 of Aeromonas hydrophila subsp. hydrophila (strain ATCC 7966 / DSM 30187 / BCRC 13018 / CCUG 14551 / JCM 1027 / KCTC 2358 / NCIMB 9240 / NCTC 8049).